The chain runs to 263 residues: 2-dehydro-3-deoxyphosphooctonate aldolase (263 aa).

The protein belongs to the KdsA family.

The protein resides in the cytoplasm. The catalysed reaction is D-arabinose 5-phosphate + phosphoenolpyruvate + H2O = 3-deoxy-alpha-D-manno-2-octulosonate-8-phosphate + phosphate. The protein operates within carbohydrate biosynthesis; 3-deoxy-D-manno-octulosonate biosynthesis; 3-deoxy-D-manno-octulosonate from D-ribulose 5-phosphate: step 2/3. Its pathway is bacterial outer membrane biogenesis; lipopolysaccharide biosynthesis. The protein is 2-dehydro-3-deoxyphosphooctonate aldolase of Wolinella succinogenes (strain ATCC 29543 / DSM 1740 / CCUG 13145 / JCM 31913 / LMG 7466 / NCTC 11488 / FDC 602W) (Vibrio succinogenes).